We begin with the raw amino-acid sequence, 494 residues long: 3-octaprenyl-4-hydroxybenzoate carboxy-lyase (494 aa).

Asn172 is a binding site for Mn(2+). Residues 175-177, 189-191, and 194-195 each bind prenylated FMN; these read IYR, RWL, and RG. Glu238 provides a ligand contact to Mn(2+). The active-site Proton donor is the Asp287.

Belongs to the UbiD family. In terms of assembly, homohexamer. It depends on prenylated FMN as a cofactor. Mn(2+) is required as a cofactor.

The protein localises to the cell membrane. The enzyme catalyses a 4-hydroxy-3-(all-trans-polyprenyl)benzoate + H(+) = a 2-(all-trans-polyprenyl)phenol + CO2. It participates in cofactor biosynthesis; ubiquinone biosynthesis. Its function is as follows. Catalyzes the decarboxylation of 3-octaprenyl-4-hydroxy benzoate to 2-octaprenylphenol, an intermediate step in ubiquinone biosynthesis. The chain is 3-octaprenyl-4-hydroxybenzoate carboxy-lyase from Cronobacter sakazakii (strain ATCC BAA-894) (Enterobacter sakazakii).